We begin with the raw amino-acid sequence, 188 residues long: Threonylcarbamoyl-AMP synthase (188 aa).

The region spanning 3–188 (QLQPSAVATT…RSGQILRNGS (186 aa)) is the YrdC-like domain.

This sequence belongs to the SUA5 family. TsaC subfamily.

It is found in the cytoplasm. It catalyses the reaction L-threonine + hydrogencarbonate + ATP = L-threonylcarbamoyladenylate + diphosphate + H2O. Functionally, required for the formation of a threonylcarbamoyl group on adenosine at position 37 (t(6)A37) in tRNAs that read codons beginning with adenine. Catalyzes the conversion of L-threonine, HCO(3)(-)/CO(2) and ATP to give threonylcarbamoyl-AMP (TC-AMP) as the acyladenylate intermediate, with the release of diphosphate. In Shewanella frigidimarina (strain NCIMB 400), this protein is Threonylcarbamoyl-AMP synthase.